The chain runs to 476 residues: Siroheme synthase 1 (476 aa).

The segment at 1 to 203 (MDYLPIFADL…GQTAEAQRQL (203 aa)) is precorrin-2 dehydrogenase /sirohydrochlorin ferrochelatase. NAD(+) is bound by residues 22 to 23 (EV) and 43 to 44 (QS). Position 128 is a phosphoserine (Ser-128). A uroporphyrinogen-III C-methyltransferase region spans residues 219–476 (GEIALVGAGP…VSRPAVVNLA (258 aa)). An S-adenosyl-L-methionine-binding site is contributed by Pro-228. Asp-251 acts as the Proton acceptor in catalysis. Residue Lys-273 is the Proton donor of the active site. S-adenosyl-L-methionine contacts are provided by residues 304–306 (GGD), Ile-309, 334–335 (TA), Met-386, and Gly-415.

In the N-terminal section; belongs to the precorrin-2 dehydrogenase / sirohydrochlorin ferrochelatase family. It in the C-terminal section; belongs to the precorrin methyltransferase family.

It carries out the reaction uroporphyrinogen III + 2 S-adenosyl-L-methionine = precorrin-2 + 2 S-adenosyl-L-homocysteine + H(+). It catalyses the reaction precorrin-2 + NAD(+) = sirohydrochlorin + NADH + 2 H(+). The enzyme catalyses siroheme + 2 H(+) = sirohydrochlorin + Fe(2+). Its pathway is cofactor biosynthesis; adenosylcobalamin biosynthesis; precorrin-2 from uroporphyrinogen III: step 1/1. The protein operates within cofactor biosynthesis; adenosylcobalamin biosynthesis; sirohydrochlorin from precorrin-2: step 1/1. It participates in porphyrin-containing compound metabolism; siroheme biosynthesis; precorrin-2 from uroporphyrinogen III: step 1/1. It functions in the pathway porphyrin-containing compound metabolism; siroheme biosynthesis; siroheme from sirohydrochlorin: step 1/1. Its pathway is porphyrin-containing compound metabolism; siroheme biosynthesis; sirohydrochlorin from precorrin-2: step 1/1. Multifunctional enzyme that catalyzes the SAM-dependent methylations of uroporphyrinogen III at position C-2 and C-7 to form precorrin-2 via precorrin-1. Then it catalyzes the NAD-dependent ring dehydrogenation of precorrin-2 to yield sirohydrochlorin. Finally, it catalyzes the ferrochelation of sirohydrochlorin to yield siroheme. This chain is Siroheme synthase 1, found in Serratia proteamaculans (strain 568).